Here is a 393-residue protein sequence, read N- to C-terminus: Proteasome-activating nucleotidase (393 aa).

The stretch at 15–53 (DEVQLVRLLEEKIKSLQIEIENLRKELNYYKAEMEKMLS) forms a coiled coil. Residues 178–183 (GTGKTM) and Tyr317 each bind ATP. Residues 365–393 (MNDLVEAINKINVKRNKMESMKERREKYS) are a coiled coil. Residues 391 to 393 (KYS) form a docks into pockets in the proteasome alpha-ring to cause gate opening region.

Belongs to the AAA ATPase family. As to quaternary structure, homohexamer. The hexameric complex has a two-ring architecture resembling a top hat that caps the 20S proteasome core at one or both ends. Upon ATP-binding, the C-terminus of PAN interacts with the alpha-rings of the proteasome core by binding to the intersubunit pockets.

Its subcellular location is the cytoplasm. Functionally, ATPase which is responsible for recognizing, binding, unfolding and translocation of substrate proteins into the archaeal 20S proteasome core particle. Is essential for opening the gate of the 20S proteasome via an interaction with its C-terminus, thereby allowing substrate entry and access to the site of proteolysis. Thus, the C-termini of the proteasomal ATPase function like a 'key in a lock' to induce gate opening and therefore regulate proteolysis. Unfolding activity requires energy from ATP hydrolysis, whereas ATP binding alone promotes ATPase-20S proteasome association which triggers gate opening, and supports translocation of unfolded substrates. The polypeptide is Proteasome-activating nucleotidase (Saccharolobus solfataricus (strain ATCC 35092 / DSM 1617 / JCM 11322 / P2) (Sulfolobus solfataricus)).